The following is a 220-amino-acid chain: Deoxyribose-phosphate aldolase (220 aa).

Asp-89 (proton donor/acceptor) is an active-site residue. Residue Lys-151 is the Schiff-base intermediate with acetaldehyde of the active site. Lys-180 (proton donor/acceptor) is an active-site residue.

The protein belongs to the DeoC/FbaB aldolase family. DeoC type 1 subfamily.

It localises to the cytoplasm. It catalyses the reaction 2-deoxy-D-ribose 5-phosphate = D-glyceraldehyde 3-phosphate + acetaldehyde. It participates in carbohydrate degradation; 2-deoxy-D-ribose 1-phosphate degradation; D-glyceraldehyde 3-phosphate and acetaldehyde from 2-deoxy-alpha-D-ribose 1-phosphate: step 2/2. Its function is as follows. Catalyzes a reversible aldol reaction between acetaldehyde and D-glyceraldehyde 3-phosphate to generate 2-deoxy-D-ribose 5-phosphate. This Streptococcus pneumoniae (strain CGSP14) protein is Deoxyribose-phosphate aldolase.